Reading from the N-terminus, the 226-residue chain is UPF0758 protein M28_Spy0816 (226 aa).

The MPN domain maps to 103–225; it reads SVLTSVQVAE…YYSFREKSTL (123 aa). The Zn(2+) site is built by H174, H176, and D187. The short motif at 174–187 is the JAMM motif element; the sequence is HNHPSGNIEPSSND.

This sequence belongs to the UPF0758 family.

The protein is UPF0758 protein M28_Spy0816 of Streptococcus pyogenes serotype M28 (strain MGAS6180).